A 414-amino-acid polypeptide reads, in one-letter code: Probable tRNA pseudouridine synthase D (414 aa).

Asp90 functions as the Nucleophile in the catalytic mechanism. The TRUD domain maps to 162 to 382 (GFPNFFGVQR…SSGDYRIISA (221 aa)).

It belongs to the pseudouridine synthase TruD family.

The catalysed reaction is uridine(13) in tRNA = pseudouridine(13) in tRNA. In terms of biological role, could be responsible for synthesis of pseudouridine from uracil-13 in transfer RNAs. The sequence is that of Probable tRNA pseudouridine synthase D from Picrophilus torridus (strain ATCC 700027 / DSM 9790 / JCM 10055 / NBRC 100828 / KAW 2/3).